We begin with the raw amino-acid sequence, 200 residues long: ADP-ribosylation factor-like protein 4A (200 aa).

G2 carries N-myristoyl glycine lipidation. GTP contacts are provided by residues 27-34 (GLDCAGKT), 75-79 (DVGGQ), and 134-137 (NKQD).

Belongs to the small GTPase superfamily. Arf family. In terms of assembly, interacts with CYTH2. Interacts with KPNA2; the interaction is direct. Does not interact with ARL4A. Post-translationally, myristoylated.

The protein resides in the cell membrane. It localises to the cytoplasm. It is found in the nucleus. The protein localises to the nucleolus. Functionally, small GTP-binding protein which cycles between an inactive GDP-bound and an active GTP-bound form, and the rate of cycling is regulated by guanine nucleotide exchange factors (GEF) and GTPase-activating proteins (GAP). GTP-binding protein that does not act as an allosteric activator of the cholera toxin catalytic subunit. Recruits CYTH1, CYTH2, CYTH3 and CYTH4 to the plasma membrane in GDP-bound form. The polypeptide is ADP-ribosylation factor-like protein 4A (ARL4A) (Homo sapiens (Human)).